The chain runs to 284 residues: UPF0354 protein SERP1303 (284 aa).

Belongs to the UPF0354 family.

In Staphylococcus epidermidis (strain ATCC 35984 / DSM 28319 / BCRC 17069 / CCUG 31568 / BM 3577 / RP62A), this protein is UPF0354 protein SERP1303.